Reading from the N-terminus, the 461-residue chain is Fibrinogen C domain-containing protein 1 (461 aa).

The interval 1 to 24 is disordered; the sequence is MVNDRWKTMGGAAQLEDRPRDKPQ. At 1-33 the chain is on the cytoplasmic side; sequence MVNDRWKTMGGAAQLEDRPRDKPQRPSCGYVLC. Residues 15 to 24 are compositionally biased toward basic and acidic residues; the sequence is LEDRPRDKPQ. A helical; Signal-anchor for type II membrane protein transmembrane segment spans residues 34–54; the sequence is TVLLALAVLLAVAVTGAVLFL. Residues 55–461 are Extracellular-facing; that stretch reads NHAHAPGTAP…MKIRPVREDR (407 aa). Residues 214-238 form a disordered region; that stretch reads GRPRNKADLQRAPARGTRPRGCATG. The Fibrinogen C-terminal domain maps to 235–458; the sequence is CATGSRPRDC…FSEMKIRPVR (224 aa). Cysteines 244 and 273 form a disulfide. N-linked (GlcNAc...) asparagine glycosylation is present at Asn-340. Ca(2+) is bound by residues Asp-393 and Asp-395. Cysteines 401 and 414 form a disulfide.

As to quaternary structure, homotetramer; disulfide-linked. As to expression, expressed in the small and large intestinal epithelial cells with a highly polarized localization to the apical surface corresponding to the brush border and in the ducts of the salivary gland.

The protein resides in the membrane. Acetyl group-binding receptor which shows a high-affinity and calcium-dependent binding to acetylated structures such as chitin, some N-acetylated carbohydrates, and amino acids, but not to their non-acetylated counterparts. Can facilitate the endocytosis of acetylated components. This Homo sapiens (Human) protein is Fibrinogen C domain-containing protein 1 (FIBCD1).